We begin with the raw amino-acid sequence, 200 residues long: GTP cyclohydrolase-2 (200 aa).

52–56 is a GTP binding site; that stretch reads RIHSE. Residues cysteine 57, cysteine 68, and cysteine 70 each contribute to the Zn(2+) site. GTP-binding positions include glutamine 73, 94 to 96, and threonine 116; that span reads EGR. Catalysis depends on aspartate 128, which acts as the Proton acceptor. Catalysis depends on arginine 130, which acts as the Nucleophile. Residues threonine 151 and lysine 156 each contribute to the GTP site.

This sequence belongs to the GTP cyclohydrolase II family. Requires Zn(2+) as cofactor.

The catalysed reaction is GTP + 4 H2O = 2,5-diamino-6-hydroxy-4-(5-phosphoribosylamino)-pyrimidine + formate + 2 phosphate + 3 H(+). The protein operates within cofactor biosynthesis; riboflavin biosynthesis; 5-amino-6-(D-ribitylamino)uracil from GTP: step 1/4. Functionally, catalyzes the conversion of GTP to 2,5-diamino-6-ribosylamino-4(3H)-pyrimidinone 5'-phosphate (DARP), formate and pyrophosphate. The sequence is that of GTP cyclohydrolase-2 from Psychromonas ingrahamii (strain DSM 17664 / CCUG 51855 / 37).